The sequence spans 120 residues: uncharacterized protein (120 aa).

Residues 79–120 are disordered; it reads TGNEIPPEPEQEVVASPVTEQKKAEPSAPPKGSKKKKRGKKK. A compositionally biased stretch (basic residues) spans 110–120; the sequence is GSKKKKRGKKK.

This is an uncharacterized protein from Schizosaccharomyces pombe (strain 972 / ATCC 24843) (Fission yeast).